The sequence spans 631 residues: UvrABC system protein C (631 aa).

The region spanning 26–105 is the GIY-YIG domain; sequence SSPGVYQFKN…IKELKPRYNV (80 aa). The UVR domain maps to 219–254; sequence SATIRSLNERMLSFAKELKFEQAAELKTQIDSLKRY.

The protein belongs to the UvrC family. Interacts with UvrB in an incision complex.

The protein localises to the cytoplasm. Its function is as follows. The UvrABC repair system catalyzes the recognition and processing of DNA lesions. UvrC both incises the 5' and 3' sides of the lesion. The N-terminal half is responsible for the 3' incision and the C-terminal half is responsible for the 5' incision. The polypeptide is UvrABC system protein C (Chlorobium phaeobacteroides (strain DSM 266 / SMG 266 / 2430)).